A 216-amino-acid polypeptide reads, in one-letter code: Peptide methionine sulfoxide reductase MsrA (216 aa).

C54 is a catalytic residue.

Belongs to the MsrA Met sulfoxide reductase family.

It carries out the reaction L-methionyl-[protein] + [thioredoxin]-disulfide + H2O = L-methionyl-(S)-S-oxide-[protein] + [thioredoxin]-dithiol. It catalyses the reaction [thioredoxin]-disulfide + L-methionine + H2O = L-methionine (S)-S-oxide + [thioredoxin]-dithiol. In terms of biological role, has an important function as a repair enzyme for proteins that have been inactivated by oxidation. Catalyzes the reversible oxidation-reduction of methionine sulfoxide in proteins to methionine. This Xanthomonas euvesicatoria pv. vesicatoria (strain 85-10) (Xanthomonas campestris pv. vesicatoria) protein is Peptide methionine sulfoxide reductase MsrA.